Here is a 1475-residue protein sequence, read N- to C-terminus: Sex-determining transformer protein 2 (1475 aa).

A signal peptide spans 1 to 31 (MKLKYNKLLVSVVIVTFVTFGLLLAECFGKS). 11 helical membrane passes run 446–466 (TIHF…IFVW), 474–494 (AFMF…VCST), 496–516 (GVIV…LANL), 589–609 (WGCT…FIDS), 737–757 (GVIL…LLFI), 902–922 (AVGV…LFAF), 928–948 (AGIF…TPTI), 952–972 (FLFS…VHLF), 979–999 (IYTN…FCAL), 1034–1054 (IAQF…ICSI), and 1060–1080 (IFFV…FNSI). The tract at residues 1133 to 1273 (EFSIKRSSPP…RERNLMNKRS (141 aa)) is interaction with fem-3. Disordered stretches follow at residues 1142-1194 (PCRY…GDNT) and 1267-1330 (NLMN…VDEP). Residues 1178–1188 (RSPKTGNKRVR) are compositionally biased toward basic residues. A compositionally biased stretch (basic and acidic residues) spans 1276-1310 (QRRESRNIEKMKKSQENLDKEKSEEKISESKKNQD). The tract at residues 1392-1413 (CEDIYWTHRTGQLPPGLQVPRR) is MX regulatory domain; required for tra-1 binding. Positions 1424–1475 (TPPPEDLNWVPPAESPPIPIPQQAFDLLEERRRNHREQQDEAREGDLSDPEV) are disordered. The segment covering 1451-1469 (LEERRRNHREQQDEAREGD) has biased composition (basic and acidic residues).

Interacts with tra-1 and fem-3. In terms of processing, undergoes cleavage by tra-3 to produce a feminizing carboxy-terminal isoform Tra-2B. Somatic and germline tissues. Isoform Tra-2B is specific to oocytes.

The protein resides in the membrane. In terms of biological role, plays a major role in controlling sexual cell fates. Promotes female development in XX animals where it sequesters one or more of the FEM proteins to the membrane thereby freeing the tra-1 protein (a putative transcription factor) to enter the nucleus and promote female development. In XO animals it acts as a receptor for her-1 which prevents it from binding to FEM proteins thereby repressing the activity of tra-1. Negatively regulates male development when bound to fem-3 and is required together with tra-1 for promoting spermatogenesis. Also required for feminizing tra-3 activity. This chain is Sex-determining transformer protein 2 (tra-2), found in Caenorhabditis elegans.